The following is a 359-amino-acid chain: MKLKQIELKNFRNYEDLKLDFHPNLNIFLGQNAQGKTNILEAIHFLALTRSHRTSHDKELICWSGQEMKVSGLVEKAHATVPLEVQLSSKGRIAKANHLKENRLADYIGQLKILMFAPENLELVKGSPATRRRFMDIELGQIHAVYLYDSMRYNRALKERNAYLKFDQAKIDKNFLTVLDEQLAEHGNKIMFERKTFIEKLEIHAKKIHEQLTHGLETLKITYNQNVKTDFSKELLSRQDHDIFRHQTTVGPHRDDLQFFINEINVADFGSQGQQRTVALSIKLAEIDLIFEETGEYPILLLDDVMSELDNHRQLDLIETSLGKTQTFITTTTLDHLKNLPENLSIFHVTDGTIEKEKE.

ATP is bound at residue 30–37 (GQNAQGKT).

The protein belongs to the RecF family.

It is found in the cytoplasm. In terms of biological role, the RecF protein is involved in DNA metabolism; it is required for DNA replication and normal SOS inducibility. RecF binds preferentially to single-stranded, linear DNA. It also seems to bind ATP. The chain is DNA replication and repair protein RecF from Lactococcus lactis subsp. cremoris (strain SK11).